We begin with the raw amino-acid sequence, 150 residues long: Cytochrome c oxidase subunit 5A, mitochondrial (150 aa).

The N-terminal 41 residues, 1-41 (MLGAALRRCAVAATTWAGPRGHLHSARTPGPAAAIQSVRCY), are a transit peptide targeting the mitochondrion. The SIFI-degron signature appears at 2 to 17 (LGAALRRCAVAATTWA). An N6-acetyllysine mark is found at K87 and K113. A Phosphothreonine modification is found at T141.

The protein belongs to the cytochrome c oxidase subunit 5A family. Component of the cytochrome c oxidase (complex IV, CIV), a multisubunit enzyme composed of 14 subunits. The complex is composed of a catalytic core of 3 subunits MT-CO1, MT-CO2 and MT-CO3, encoded in the mitochondrial DNA, and 11 supernumerary subunits COX4I, COX5A, COX5B, COX6A, COX6B, COX6C, COX7A, COX7B, COX7C, COX8 and NDUFA4, which are encoded in the nuclear genome. The complex exists as a monomer or a dimer and forms supercomplexes (SCs) in the inner mitochondrial membrane with NADH-ubiquinone oxidoreductase (complex I, CI) and ubiquinol-cytochrome c oxidoreductase (cytochrome b-c1 complex, complex III, CIII), resulting in different assemblies (supercomplex SCI(1)III(2)IV(1) and megacomplex MCI(2)III(2)IV(2)). Interacts with AFG1L. Interacts with RAB5IF. Post-translationally, in response to mitochondrial stress, the precursor protein is ubiquitinated by the SIFI complex in the cytoplasm before mitochondrial import, leading to its degradation. Within the SIFI complex, UBR4 initiates ubiquitin chain that are further elongated or branched by KCMF1.

It localises to the mitochondrion inner membrane. The protein operates within energy metabolism; oxidative phosphorylation. In terms of biological role, component of the cytochrome c oxidase, the last enzyme in the mitochondrial electron transport chain which drives oxidative phosphorylation. The respiratory chain contains 3 multisubunit complexes succinate dehydrogenase (complex II, CII), ubiquinol-cytochrome c oxidoreductase (cytochrome b-c1 complex, complex III, CIII) and cytochrome c oxidase (complex IV, CIV), that cooperate to transfer electrons derived from NADH and succinate to molecular oxygen, creating an electrochemical gradient over the inner membrane that drives transmembrane transport and the ATP synthase. Cytochrome c oxidase is the component of the respiratory chain that catalyzes the reduction of oxygen to water. Electrons originating from reduced cytochrome c in the intermembrane space (IMS) are transferred via the dinuclear copper A center (CU(A)) of subunit 2 and heme A of subunit 1 to the active site in subunit 1, a binuclear center (BNC) formed by heme A3 and copper B (CU(B)). The BNC reduces molecular oxygen to 2 water molecules using 4 electrons from cytochrome c in the IMS and 4 protons from the mitochondrial matrix. The sequence is that of Cytochrome c oxidase subunit 5A, mitochondrial (COX5A) from Symphalangus syndactylus (Siamang).